A 99-amino-acid chain; its full sequence is Large ribosomal subunit protein bL27 (99 aa).

The propeptide occupies 1–10; the sequence is MKLIFDIQLF.

Belongs to the bacterial ribosomal protein bL27 family. Post-translationally, the N-terminus is cleaved by ribosomal processing cysteine protease Prp.

In Caldicellulosiruptor saccharolyticus (strain ATCC 43494 / DSM 8903 / Tp8T 6331), this protein is Large ribosomal subunit protein bL27.